A 412-amino-acid polypeptide reads, in one-letter code: MLTKQTLLAFVGALALATGTTTTEETPTQAEIDAARATALPYSPVSNVKGLAFDRFVNIWLENTDFEPAALDENLSKLAKEGILLTNYFAISHPSQPNYCASAGGDTFGMDNDDFLQIPSNVSTIADLFDTKHISWGEYQEDMPYAGYQGKRYPLSGPNQYVRKHNPLVLFNSVTDDAVRPRQIKNFTTFYDDLKHHSLPQHMFITPNMTNDAHDTNITVAGNWVDRFLSPLLKNEYFTKDSLVLLTFDEGDTYSYPNRVFSFLVGGAIPEHLKGTTDDTFYTHYSIVASLSANWGLPSLGRWDCGANLLKMVADKTGYVNWEVDTSNVYLNETYPGPMSTDNYSSKWAVPATKGKCSAGHGIAEVVKNTYHGLQPTYDYASPVPYDVTSGNNVGIKYHRTLVCILSCSSLS.

The signal sequence occupies residues Met1 to Gly19. Asn74, Asn121, Asn186, and Asn208 each carry an N-linked (GlcNAc...) asparagine glycan. Residue Asp215 is the Proton donor of the active site. Residues Asn217, Asn332, and Asn343 are each glycosylated (N-linked (GlcNAc...) asparagine).

In terms of processing, the N-terminus is blocked.

The protein localises to the secreted. It catalyses the reaction a phosphate monoester + H2O = an alcohol + phosphate. This Penicillium chrysogenum (Penicillium notatum) protein is Phosphate-repressible acid phosphatase (PHOA).